A 2897-amino-acid chain; its full sequence is Chromodomain-helicase-DNA-binding protein 9 (2897 aa).

The segment covering 173 to 201 (QCTSLRSQQNRNNLNPGQNSLSQSKNFMN) has biased composition (polar residues). Disordered regions lie at residues 173-265 (QCTS…CSVS), 482-525 (QRQP…KQEK), and 537-671 (AKER…SAPL). Lys197 is covalently cross-linked (Glycyl lysine isopeptide (Lys-Gly) (interchain with G-Cter in SUMO2)). Residues 220–235 (SNSQQSISMQQFSQTS) show a composition bias toward low complexity. Polar residues-rich tracts occupy residues 247 to 260 (HQEG…PNMT) and 484 to 506 (QPPS…TQVR). Position 499 is an N6-acetyllysine (Lys499). Over residues 508-525 (MSEKKQRKKVESESKQEK) the composition is skewed to basic and acidic residues. Residue Ser550 is modified to Phosphoserine. Residues 573–593 (KPKDKDSKKTKTCSKLKEKTK) are compositionally biased toward basic and acidic residues. Lys596 participates in a covalent cross-link: Glycyl lysine isopeptide (Lys-Gly) (interchain with G-Cter in SUMO2). Ser611 bears the Phosphoserine mark. Residues 634–644 (RRSNRQIKRKK) show a composition bias toward basic residues. Residues 645 to 660 (YAEDIEGKQSEEEVKG) are compositionally biased toward basic and acidic residues. Chromo domains are found at residues 690–761 (AIVD…HFFA) and 773–839 (VEVD…RLDR). The LXXLL motif 1 signature appears at 868-872 (LNWLL). Residues 872–1046 (LFNWYNRRNC…FSLLHFLEPL (175 aa)) form the Helicase ATP-binding domain. Position 885 to 892 (885 to 892 (DEMGLGKT)) interacts with ATP. The DEAH box motif lies at 997-1000 (DEAH). The LXXLL motif 2 motif lies at 1036-1040 (LFSLL). The Helicase C-terminal domain occupies 1186 to 1337 (LIDKLLPKMK…KAVLQSMSGR (152 aa)). The interval 1461–1484 (KDELAELSEAESEGDEKPKLRRPC) is disordered. Positions 1465–1474 (AELSEAESEG) are enriched in acidic residues. Residues Ser1468 and Ser1472 each carry the phosphoserine modification. Residues 1475 to 1484 (DEKPKLRRPC) are compositionally biased toward basic and acidic residues. Glycyl lysine isopeptide (Lys-Gly) (interchain with G-Cter in SUMO2) cross-links involve residues Lys1588, Lys1738, and Lys1903. The residue at position 2026 (Ser2026) is a Phosphoserine. Positions 2031 to 2035 (LPRLL) match the LXXLL motif 3 motif. Lys2038 is covalently cross-linked (Glycyl lysine isopeptide (Lys-Gly) (interchain with G-Cter in SUMO2)). 2 disordered regions span residues 2050-2238 (ENLK…QMNN) and 2305-2337 (GAAT…SKVK). Phosphoserine is present on residues Ser2058 and Ser2059. Lys2074 is covalently cross-linked (Glycyl lysine isopeptide (Lys-Gly) (interchain with G-Cter in SUMO2)). Phosphoserine occurs at positions 2075 and 2079. A compositionally biased stretch (basic and acidic residues) spans 2094 to 2104 (SGGKCETDRRM). The segment covering 2141-2193 (SSCSSRSSSSSSSSSCSHSRSGSSSSSSSSCSSASSSSSSSTSSSSSSSSSSS) has biased composition (low complexity). Over residues 2203-2216 (AQKRESTTHMKAYD) the composition is skewed to basic and acidic residues. A compositionally biased stretch (polar residues) spans 2221-2238 (ASLSTTQDETQDSFQMNN). Residues 2332-2481 (QMSKVKKHVR…LSYTQPQGIP (150 aa)) form a binds A/T-rich DNA region. Residues Lys2350, Lys2356, and Lys2361 each participate in a glycyl lysine isopeptide (Lys-Gly) (interchain with G-Cter in SUMO2) cross-link. The interval 2429–2436 (KKRRGRRK) is a.T hook-like. The LXXLL motif 4 signature appears at 2721-2725 (LPNLL). The tract at residues 2729–2777 (GLLTKPTESGTEDKKGSDSKESEGKTERTESQSSENGGENSVSSSPSTS) is disordered. A compositionally biased stretch (basic and acidic residues) spans 2739–2758 (TEDKKGSDSKESEGKTERTE). Low complexity predominate over residues 2759–2777 (SQSSENGGENSVSSSPSTS). The LXXLL motif 5 motif lies at 2793–2797 (LNPLL). Residues 2827 to 2897 (VQNKNSDLGS…SEDSDSSNED (71 aa)) form a disordered region. Basic and acidic residues predominate over residues 2840–2857 (VEVKEEDSRIKDQEDKGG). Lys2843 participates in a covalent cross-link: Glycyl lysine isopeptide (Lys-Gly) (interchain with G-Cter in SUMO2). A compositionally biased stretch (low complexity) spans 2877-2888 (ASSGSDSTSSSS).

The protein belongs to the SNF2/RAD54 helicase family. Interacts with PPARA. Probably interacts with ESR1 and NR1I3. Phosphorylated on serine and tyrosine residues. In terms of tissue distribution, widely expressed at low levels. In bone marrow, expression is restricted to osteoprogenitor cells adjacent to mature osteoblasts.

It localises to the cytoplasm. The protein resides in the nucleus. It catalyses the reaction ATP + H2O = ADP + phosphate + H(+). Its function is as follows. Probable ATP-dependent chromatin-remodeling factor. Acts as a transcriptional coactivator for PPARA and possibly other nuclear receptors. Has DNA-dependent ATPase activity and binds to A/T-rich DNA. Associates with A/T-rich regulatory regions in promoters of genes that participate in the differentiation of progenitors during osteogenesis. This is Chromodomain-helicase-DNA-binding protein 9 (CHD9) from Homo sapiens (Human).